Here is a 156-residue protein sequence, read N- to C-terminus: 6,7-dimethyl-8-ribityllumazine synthase (156 aa).

5-amino-6-(D-ribitylamino)uracil-binding positions include Phe23, 57–59 (SFE), and 81–83 (AVI). (2S)-2-hydroxy-3-oxobutyl phosphate is bound at residue 86–87 (GT). His89 functions as the Proton donor in the catalytic mechanism. Tyr114 contributes to the 5-amino-6-(D-ribitylamino)uracil binding site. Position 128 (Arg128) interacts with (2S)-2-hydroxy-3-oxobutyl phosphate.

The protein belongs to the DMRL synthase family. In terms of assembly, forms an icosahedral capsid composed of 60 subunits, arranged as a dodecamer of pentamers.

It carries out the reaction (2S)-2-hydroxy-3-oxobutyl phosphate + 5-amino-6-(D-ribitylamino)uracil = 6,7-dimethyl-8-(1-D-ribityl)lumazine + phosphate + 2 H2O + H(+). Its pathway is cofactor biosynthesis; riboflavin biosynthesis; riboflavin from 2-hydroxy-3-oxobutyl phosphate and 5-amino-6-(D-ribitylamino)uracil: step 1/2. Catalyzes the formation of 6,7-dimethyl-8-ribityllumazine by condensation of 5-amino-6-(D-ribitylamino)uracil with 3,4-dihydroxy-2-butanone 4-phosphate. This is the penultimate step in the biosynthesis of riboflavin. The sequence is that of 6,7-dimethyl-8-ribityllumazine synthase from Halorhodospira halophila (strain DSM 244 / SL1) (Ectothiorhodospira halophila (strain DSM 244 / SL1)).